A 253-amino-acid chain; its full sequence is uncharacterized protein (253 aa).

A signal peptide spans 1 to 15 (MNRVILFHFHFFKNA).

This is an uncharacterized protein from Archaeoglobus fulgidus (strain ATCC 49558 / DSM 4304 / JCM 9628 / NBRC 100126 / VC-16).